Here is a 206-residue protein sequence, read N- to C-terminus: Transmembrane emp24 domain-containing protein bai (206 aa).

The signal sequence occupies residues 1 to 17; it reads MAKATFFYFLFIGYVWP. The Lumenal segment spans residues 18–172; that stretch reads IDSVMFNLAP…RDTNEKTNSR (155 aa). Positions 30–140 constitute a GOLD domain; that stretch reads QKCLKEDIQA…LKPLEVDLKR (111 aa). Residues 173 to 193 traverse the membrane as a helical segment; that stretch reads VLFFSIFSMCCLLGLATWQVL. At 194 to 206 the chain is on the cytoplasmic side; it reads YLRRYFKAKKLIE.

It belongs to the EMP24/GP25L family.

Its subcellular location is the membrane. Functionally, eca and bai are essential, though not redundant, for dorsoventral patterning of the embryo. Specifically required during early embryogenesis for the activity of maternal tkv, while the zygotic tkv is not affected. The polypeptide is Transmembrane emp24 domain-containing protein bai (Drosophila persimilis (Fruit fly)).